We begin with the raw amino-acid sequence, 391 residues long: 4-hydroxy-3-methylbut-2-en-1-yl diphosphate synthase (flavodoxin) (391 aa).

[4Fe-4S] cluster is bound by residues Cys286, Cys289, Cys321, and Glu328.

This sequence belongs to the IspG family. It depends on [4Fe-4S] cluster as a cofactor.

The catalysed reaction is (2E)-4-hydroxy-3-methylbut-2-enyl diphosphate + oxidized [flavodoxin] + H2O + 2 H(+) = 2-C-methyl-D-erythritol 2,4-cyclic diphosphate + reduced [flavodoxin]. Its pathway is isoprenoid biosynthesis; isopentenyl diphosphate biosynthesis via DXP pathway; isopentenyl diphosphate from 1-deoxy-D-xylulose 5-phosphate: step 5/6. Functionally, converts 2C-methyl-D-erythritol 2,4-cyclodiphosphate (ME-2,4cPP) into 1-hydroxy-2-methyl-2-(E)-butenyl 4-diphosphate. The protein is 4-hydroxy-3-methylbut-2-en-1-yl diphosphate synthase (flavodoxin) of Corynebacterium diphtheriae (strain ATCC 700971 / NCTC 13129 / Biotype gravis).